Consider the following 198-residue polypeptide: Probable GTP-binding protein EngB (198 aa).

The EngB-type G domain occupies 22-195 (DLPEIALAGR…WKAIHKFTKT (174 aa)). GTP contacts are provided by residues 30–37 (GRSNVGKS), 57–61 (GKTQT), 75–78 (DVPG), 142–145 (TKAD), and 174–176 (FSS). Ser37 and Thr59 together coordinate Mg(2+).

This sequence belongs to the TRAFAC class TrmE-Era-EngA-EngB-Septin-like GTPase superfamily. EngB GTPase family. Mg(2+) serves as cofactor.

Functionally, necessary for normal cell division and for the maintenance of normal septation. This chain is Probable GTP-binding protein EngB, found in Bacillus anthracis (strain A0248).